A 299-amino-acid chain; its full sequence is Aspartate carbamoyltransferase catalytic subunit (299 aa).

Carbamoyl phosphate-binding residues include R51 and T52. K80 is a binding site for L-aspartate. The carbamoyl phosphate site is built by R101, H129, and Q132. Positions 162 and 221 each coordinate L-aspartate. L260 and P261 together coordinate carbamoyl phosphate.

This sequence belongs to the aspartate/ornithine carbamoyltransferase superfamily. ATCase family. As to quaternary structure, heterooligomer of catalytic and regulatory chains.

The catalysed reaction is carbamoyl phosphate + L-aspartate = N-carbamoyl-L-aspartate + phosphate + H(+). The protein operates within pyrimidine metabolism; UMP biosynthesis via de novo pathway; (S)-dihydroorotate from bicarbonate: step 2/3. In terms of biological role, catalyzes the condensation of carbamoyl phosphate and aspartate to form carbamoyl aspartate and inorganic phosphate, the committed step in the de novo pyrimidine nucleotide biosynthesis pathway. This chain is Aspartate carbamoyltransferase catalytic subunit, found in Sulfolobus acidocaldarius (strain ATCC 33909 / DSM 639 / JCM 8929 / NBRC 15157 / NCIMB 11770).